The sequence spans 262 residues: Probable ketoamine kinase TTHA1179 (262 aa).

An ATP-binding site is contributed by Ala-79 to Leu-81. The Proton acceptor role is filled by Asp-172.

It belongs to the fructosamine kinase family.

It carries out the reaction N(6)-(D-ribulosyl)-L-lysine + ATP = N(6)-(3-O-phospho-D-ribulosyl)-L-lysine + ADP + H(+). The catalysed reaction is N(6)-(D-erythrulosyl)-L-lysine + ATP = N(6)-(3-O-phospho-D-erythrulosyl)-L-lysine + ADP + H(+). The enzyme catalyses N(6)-D-ribulosyl-L-lysyl-[protein] + ATP = N(6)-(3-O-phospho-D-ribulosyl)-L-lysyl-[protein] + ADP + H(+). It catalyses the reaction N(6)-(D-erythrulosyl)-L-lysyl-[protein] + ATP = N(6)-(3-O-phospho-D-erythrulosyl)-L-lysyl-[protein] + ADP + H(+). Functionally, ketoamine kinase that phosphorylates ketoamines, such as erythruloselysine and ribuloselysine, on the third carbon of the sugar moiety to generate ketoamine 3-phosphate. Has higher activity on free lysine (erythruloselysine and ribuloselysine), than on ribuloselysine and erythruloselysine residues on glycated proteins. This Thermus thermophilus (strain ATCC 27634 / DSM 579 / HB8) protein is Probable ketoamine kinase TTHA1179.